The primary structure comprises 442 residues: Transcription factor AP-2-epsilon (442 aa).

The short motif at 54 to 59 is the PPxY motif element; it reads YFPPPY. At Ser246 the chain carries Phosphoserine; by PKA. Residues 287–417 form an H-S-H (helix-span-helix), dimerization region; the sequence is RRKAANVTLL…YLLESLKGLD (131 aa).

The protein belongs to the AP-2 family. As to quaternary structure, binds DNA as a dimer. Can form homodimers or heterodimers with other AP-2 family members. Expressed in skin, primary keratinocytes, immortalized keratinocytes, and HeLa cell line.

The protein resides in the nucleus. Functionally, sequence-specific DNA-binding protein that interacts with inducible viral and cellular enhancer elements to regulate transcription of selected genes. AP-2 factors bind to the consensus sequence 5'-GCCNNNGGC-3' and activate genes involved in a large spectrum of important biological functions including proper eye, face, body wall, limb and neural tube development. They also suppress a number of genes including MCAM/MUC18, C/EBP alpha and MYC. AP-2-epsilon may play a role in the development of the CNS and in cartilage differentiation. The sequence is that of Transcription factor AP-2-epsilon from Homo sapiens (Human).